The following is a 234-amino-acid chain: 2-C-methyl-D-erythritol 4-phosphate cytidylyltransferase (234 aa).

This sequence belongs to the IspD/TarI cytidylyltransferase family. IspD subfamily.

It carries out the reaction 2-C-methyl-D-erythritol 4-phosphate + CTP + H(+) = 4-CDP-2-C-methyl-D-erythritol + diphosphate. It participates in isoprenoid biosynthesis; isopentenyl diphosphate biosynthesis via DXP pathway; isopentenyl diphosphate from 1-deoxy-D-xylulose 5-phosphate: step 2/6. Its function is as follows. Catalyzes the formation of 4-diphosphocytidyl-2-C-methyl-D-erythritol from CTP and 2-C-methyl-D-erythritol 4-phosphate (MEP). The sequence is that of 2-C-methyl-D-erythritol 4-phosphate cytidylyltransferase from Syntrophus aciditrophicus (strain SB).